We begin with the raw amino-acid sequence, 1273 residues long: DNA-directed RNA polymerase subunit beta (1273 aa).

Residues 1252-1273 form a disordered region; that stretch reads ADDQDLVVSSNDEEVSENDERS.

The protein belongs to the RNA polymerase beta chain family. The RNAP catalytic core consists of 2 alpha, 1 beta, 1 beta' and 1 omega subunit. When a sigma factor is associated with the core the holoenzyme is formed, which can initiate transcription.

The enzyme catalyses RNA(n) + a ribonucleoside 5'-triphosphate = RNA(n+1) + diphosphate. Its function is as follows. DNA-dependent RNA polymerase catalyzes the transcription of DNA into RNA using the four ribonucleoside triphosphates as substrates. This Dehalococcoides mccartyi (strain ATCC BAA-2100 / JCM 16839 / KCTC 5957 / BAV1) protein is DNA-directed RNA polymerase subunit beta.